Reading from the N-terminus, the 286-residue chain is Flagellin FlaB1 (286 aa).

The required for interaction with FliW stretch occupies residues 231–286 (LDIAAENLQAAESRIRDANIAKQMVEYTKNQVLTQSGTAMLAQANTSAQSILSILR).

The protein belongs to the bacterial flagellin family. The flagellum consists of an outer layer composed of repeating units of FlaA around a core that contains several antigenically related polypeptides. Interacts via its C-terminus with FliW; a synthetic peptide of residues 229-247 partially blocks binding to FliW.

The protein localises to the periplasmic flagellum. It localises to the periplasm. Functionally, component of the core of the flagella. This Treponema pallidum (strain Nichols) protein is Flagellin FlaB1 (flaB1).